The primary structure comprises 1798 residues: U3 small nucleolar RNA-associated protein 10 (1798 aa).

One copy of the HEAT 1 repeat lies at 583-620; sequence LDFQALLPFLLVTLTDPSERVRREAAAALAAVGSLYKK. 2 helical membrane passes run 942–962 and 998–1018; these read IQSG…AIVN and ALLL…HSVM. 4 HEAT repeats span residues 1042 to 1079, 1249 to 1286, 1293 to 1331, and 1754 to 1791; these read QTID…AFEH, LTLV…QNPE, IRVL…KYGK, and ALLP…VLGE.

It belongs to the HEATR1/UTP10 family. As to quaternary structure, component of the ribosomal small subunit (SSU) processome.

The protein resides in the nucleus. It is found in the nucleolus. The protein localises to the membrane. Functionally, involved in nucleolar processing of pre-18S ribosomal RNA. Involved in ribosome biosynthesis. The chain is U3 small nucleolar RNA-associated protein 10 from Aspergillus fumigatus (strain ATCC MYA-4609 / CBS 101355 / FGSC A1100 / Af293) (Neosartorya fumigata).